Reading from the N-terminus, the 223-residue chain is Cell division protein SepF (223 aa).

The disordered stretch occupies residues 19–81 (YDDEYYDDRG…YPPPGGYRGG (63 aa)). Positions 36–69 (PRFEDDYGRYEGRDFEDPRRDPRAGMRADLRGEP) are enriched in basic and acidic residues.

Belongs to the SepF family. In terms of assembly, homodimer. Interacts with FtsZ.

The protein localises to the cytoplasm. Cell division protein that is part of the divisome complex and is recruited early to the Z-ring. Probably stimulates Z-ring formation, perhaps through the cross-linking of FtsZ protofilaments. Its function overlaps with FtsA. This chain is Cell division protein SepF, found in Mycobacterium ulcerans (strain Agy99).